Consider the following 195-residue polypeptide: 2-amino-4-hydroxy-6-hydroxymethyldihydropteridine pyrophosphokinase (195 aa).

It belongs to the HPPK family.

The catalysed reaction is 6-hydroxymethyl-7,8-dihydropterin + ATP = (7,8-dihydropterin-6-yl)methyl diphosphate + AMP + H(+). It participates in cofactor biosynthesis; tetrahydrofolate biosynthesis; 2-amino-4-hydroxy-6-hydroxymethyl-7,8-dihydropteridine diphosphate from 7,8-dihydroneopterin triphosphate: step 4/4. In terms of biological role, catalyzes the transfer of pyrophosphate from adenosine triphosphate (ATP) to 6-hydroxymethyl-7,8-dihydropterin, an enzymatic step in folate biosynthesis pathway. This Synechocystis sp. (strain ATCC 27184 / PCC 6803 / Kazusa) protein is 2-amino-4-hydroxy-6-hydroxymethyldihydropteridine pyrophosphokinase (folK).